We begin with the raw amino-acid sequence, 605 residues long: Copper resistance protein A (605 aa).

Residues 1-41 constitute a signal peptide (tat-type signal); it reads MLLKTSRRTFLKGLTLSGVAGSLGVWSFNARSSLSLPVAAS. 4 residues coordinate Cu cation: His-100, His-102, His-142, and His-144. 3 consecutive repeat copies span residues 382–389, 414–421, and 422–429. The interval 382–429 is 3 X 8 AA tandem repeats of D-H-X-X-M-X-G-M; the sequence is DHSQMGGMDNSGEMMSMDGADLPDSGTSSAPMDHSSMAGMDHSRMAGM. Positions 538, 541, 543, 586, 587, 588, 592, and 597 each coordinate Cu cation.

The protein belongs to the multicopper oxidase family. CopA subfamily. In terms of processing, predicted to be exported by the Tat system. The position of the signal peptide cleavage has not been experimentally proven.

It localises to the periplasm. Its function is as follows. Required for the copper-inducible expression of copper resistance. May have oxidase activity. The chain is Copper resistance protein A (pcoA) from Escherichia coli.